We begin with the raw amino-acid sequence, 768 residues long: Polyadenylate-binding protein, cytoplasmic and nuclear (768 aa).

Over residues 1–11 the composition is skewed to polar residues; it reads MSAETATNPPV. The interval 1–52 is disordered; it reads MSAETATNPPVDTTPGAAPESATNGSNANVAADTTAGEASQTTSSTTPTAQP. Over residues 39–52 the composition is skewed to low complexity; that stretch reads ASQTTSSTTPTAQP. RRM domains follow at residues 55–133, 143–220, 236–314, and 340–470; these read ASLY…WSQR, GNVF…HHIA, TNVY…RAQK, and VNLY…LAQR. Disordered regions lie at residues 374–428, 633–662, and 739–768; these read DFAP…EKKP, QQGM…NASP, and KNKG…ETKS. Residues 637–646 show a composition bias toward gly residues; the sequence is GRPGQAGRGQ. One can recognise a PABC domain in the interval 662-739; it reads PNGLTLQVLN…ALTVYDEYVK (78 aa). Residues 753–768 show a composition bias toward basic and acidic residues; the sequence is NKSKDASQETAEETKS.

The protein belongs to the polyadenylate-binding protein type-1 family.

Its subcellular location is the cytoplasm. The protein resides in the nucleus. Its function is as follows. Binds the poly(A) tail of mRNA. Appears to be an important mediator of the multiple roles of the poly(A) tail in mRNA biogenesis, stability and translation. In the nucleus, involved in both mRNA cleavage and polyadenylation. Is also required for efficient mRNA export to the cytoplasm. Acts in concert with a poly(A)-specific nuclease (PAN) to affect poly(A) tail shortening, which may occur concomitantly with either nucleocytoplasmic mRNA transport or translational initiation. In the cytoplasm, stimulates translation initiation and regulates mRNA decay through translation termination-coupled poly(A) shortening, probably mediated by PAN. This chain is Polyadenylate-binding protein, cytoplasmic and nuclear (PAB1), found in Coccidioides immitis (strain RS) (Valley fever fungus).